Reading from the N-terminus, the 313-residue chain is Porphobilinogen deaminase (313 aa).

S-(dipyrrolylmethanemethyl)cysteine is present on C241.

It belongs to the HMBS family. In terms of assembly, monomer. Dipyrromethane is required as a cofactor.

It catalyses the reaction 4 porphobilinogen + H2O = hydroxymethylbilane + 4 NH4(+). The protein operates within porphyrin-containing compound metabolism; protoporphyrin-IX biosynthesis; coproporphyrinogen-III from 5-aminolevulinate: step 2/4. In terms of biological role, tetrapolymerization of the monopyrrole PBG into the hydroxymethylbilane pre-uroporphyrinogen in several discrete steps. The protein is Porphobilinogen deaminase of Idiomarina loihiensis (strain ATCC BAA-735 / DSM 15497 / L2-TR).